Here is a 471-residue protein sequence, read N- to C-terminus: Soluble pyridine nucleotide transhydrogenase (471 aa).

Position 41–50 (Glu41–Cys50) interacts with FAD.

It belongs to the class-I pyridine nucleotide-disulfide oxidoreductase family. It depends on FAD as a cofactor.

The protein resides in the cytoplasm. The enzyme catalyses NAD(+) + NADPH = NADH + NADP(+). Functionally, conversion of NADPH, generated by peripheral catabolic pathways, to NADH, which can enter the respiratory chain for energy generation. The polypeptide is Soluble pyridine nucleotide transhydrogenase (Aliivibrio fischeri (strain ATCC 700601 / ES114) (Vibrio fischeri)).